Reading from the N-terminus, the 151-residue chain is Transcriptional repressor NrdR (151 aa).

Residues 3–34 (CPYCAYGESKVVDSRSTEDGSSIRRRRECLKC) fold into a zinc finger. Positions 49–139 (ILVIKKNMSR…VYRQFKDINT (91 aa)) constitute an ATP-cone domain.

This sequence belongs to the NrdR family. The cofactor is Zn(2+).

Its function is as follows. Negatively regulates transcription of bacterial ribonucleotide reductase nrd genes and operons by binding to NrdR-boxes. This chain is Transcriptional repressor NrdR, found in Clostridium botulinum (strain Loch Maree / Type A3).